A 469-amino-acid chain; its full sequence is Glutamate--tRNA ligase 1 (469 aa).

The 'HIGH' region motif lies at 9-19 (PSPTGYLHVGG). Residues C98, C100, C125, and E127 each coordinate Zn(2+). A 'KMSKS' region motif is present at residues 236 to 240 (RLSKR). K239 is a binding site for ATP.

Belongs to the class-I aminoacyl-tRNA synthetase family. Glutamate--tRNA ligase type 1 subfamily. In terms of assembly, monomer. The cofactor is Zn(2+).

The protein resides in the cytoplasm. The enzyme catalyses tRNA(Glu) + L-glutamate + ATP = L-glutamyl-tRNA(Glu) + AMP + diphosphate. Functionally, catalyzes the attachment of glutamate to tRNA(Glu) in a two-step reaction: glutamate is first activated by ATP to form Glu-AMP and then transferred to the acceptor end of tRNA(Glu). This Nitrosococcus oceani (strain ATCC 19707 / BCRC 17464 / JCM 30415 / NCIMB 11848 / C-107) protein is Glutamate--tRNA ligase 1.